The sequence spans 510 residues: Proline--tRNA ligase (510 aa).

It belongs to the class-II aminoacyl-tRNA synthetase family. ProS type 3 subfamily. As to quaternary structure, homodimer.

The protein localises to the cytoplasm. It catalyses the reaction tRNA(Pro) + L-proline + ATP = L-prolyl-tRNA(Pro) + AMP + diphosphate. Its function is as follows. Catalyzes the attachment of proline to tRNA(Pro) in a two-step reaction: proline is first activated by ATP to form Pro-AMP and then transferred to the acceptor end of tRNA(Pro). This is Proline--tRNA ligase from Sphingomonas elodea.